A 168-amino-acid chain; its full sequence is tRNA (cytidine(56)-2'-O)-methyltransferase (168 aa).

S-adenosyl-L-methionine-binding positions include L79 and 104 to 108 (GAEKV).

The protein belongs to the aTrm56 family. In terms of assembly, homodimer.

Its subcellular location is the cytoplasm. It carries out the reaction cytidine(56) in tRNA + S-adenosyl-L-methionine = 2'-O-methylcytidine(56) in tRNA + S-adenosyl-L-homocysteine + H(+). Functionally, specifically catalyzes the AdoMet-dependent 2'-O-ribose methylation of cytidine at position 56 in tRNAs. The chain is tRNA (cytidine(56)-2'-O)-methyltransferase from Archaeoglobus fulgidus (strain ATCC 49558 / DSM 4304 / JCM 9628 / NBRC 100126 / VC-16).